The following is a 299-amino-acid chain: Pantothenate synthetase (299 aa).

41-48 (MGALHEGH) is an ATP binding site. Histidine 48 (proton donor) is an active-site residue. Glutamine 72 lines the (R)-pantoate pocket. Glutamine 72 provides a ligand contact to beta-alanine. 158-161 (GQKD) provides a ligand contact to ATP. Glutamine 164 is a (R)-pantoate binding site. ATP-binding positions include valine 187 and 195–198 (MSSR).

It belongs to the pantothenate synthetase family. In terms of assembly, homodimer.

The protein resides in the cytoplasm. It catalyses the reaction (R)-pantoate + beta-alanine + ATP = (R)-pantothenate + AMP + diphosphate + H(+). Its pathway is cofactor biosynthesis; (R)-pantothenate biosynthesis; (R)-pantothenate from (R)-pantoate and beta-alanine: step 1/1. Functionally, catalyzes the condensation of pantoate with beta-alanine in an ATP-dependent reaction via a pantoyl-adenylate intermediate. This is Pantothenate synthetase from Acidobacterium capsulatum (strain ATCC 51196 / DSM 11244 / BCRC 80197 / JCM 7670 / NBRC 15755 / NCIMB 13165 / 161).